The primary structure comprises 117 residues: Non-specific lipid-transfer protein 1 (117 aa).

An N-terminal signal peptide occupies residues methionine 1–alanine 26. 4 cysteine pairs are disulfide-bonded: cysteine 29–cysteine 76, cysteine 39–cysteine 53, cysteine 54–cysteine 99, and cysteine 74–cysteine 113. A lipid anchor (Cis-14-hydroxy-10,13-dioxo-7-heptadecenoic acid aspartate ester) is attached at aspartate 33.

The protein belongs to the plant LTP family. As to expression, aleurone layer of developing and germinating seeds.

Plant non-specific lipid-transfer proteins transfer phospholipids as well as galactolipids across membranes. May play a role in wax or cutin deposition in the cell walls of expanding epidermal cells and certain secretory tissues. This Hordeum vulgare (Barley) protein is Non-specific lipid-transfer protein 1 (LTP1).